Consider the following 84-residue polypeptide: MRKGIHPEYRPVVFRDRAADYAFLTRSTMTSERTVEWEDGRTYPVVDVEVSHVSHPFYTGTARVLDTAGRVERFERRYGKQDGA.

Belongs to the bacterial ribosomal protein bL31 family. Type B subfamily. In terms of assembly, part of the 50S ribosomal subunit.

This is Large ribosomal subunit protein bL31B-2 from Streptomyces coelicolor (strain ATCC BAA-471 / A3(2) / M145).